A 124-amino-acid polypeptide reads, in one-letter code: Large ribosomal subunit protein bL12 (124 aa).

The protein belongs to the bacterial ribosomal protein bL12 family. Homodimer. Part of the ribosomal stalk of the 50S ribosomal subunit. Forms a multimeric L10(L12)X complex, where L10 forms an elongated spine to which 2 to 4 L12 dimers bind in a sequential fashion. Binds GTP-bound translation factors.

Forms part of the ribosomal stalk which helps the ribosome interact with GTP-bound translation factors. Is thus essential for accurate translation. The chain is Large ribosomal subunit protein bL12 from Xanthobacter autotrophicus (strain ATCC BAA-1158 / Py2).